The sequence spans 186 residues: Peptidyl-tRNA hydrolase (186 aa).

Y14 is a binding site for tRNA. H19 serves as the catalytic Proton acceptor. Y61, N63, and N107 together coordinate tRNA.

The protein belongs to the PTH family. As to quaternary structure, monomer.

The protein localises to the cytoplasm. It carries out the reaction an N-acyl-L-alpha-aminoacyl-tRNA + H2O = an N-acyl-L-amino acid + a tRNA + H(+). Functionally, hydrolyzes ribosome-free peptidyl-tRNAs (with 1 or more amino acids incorporated), which drop off the ribosome during protein synthesis, or as a result of ribosome stalling. In terms of biological role, catalyzes the release of premature peptidyl moieties from peptidyl-tRNA molecules trapped in stalled 50S ribosomal subunits, and thus maintains levels of free tRNAs and 50S ribosomes. This chain is Peptidyl-tRNA hydrolase, found in Helicobacter pylori (strain J99 / ATCC 700824) (Campylobacter pylori J99).